The chain runs to 472 residues: Acyltransferase PapA3 (472 aa).

Belongs to the PapA acyltransferase family.

The enzyme catalyses a long-chain fatty acyl-CoA + alpha,alpha-trehalose = a 2-O-(long-chain fatty acyl)-alpha,alpha-trehalose + CoA. It carries out the reaction a mycolipenoyl-CoA + a 2-O-(long-chain fatty acyl)-alpha,alpha-trehalose = a 2-O-(long-chain fatty acyl)-3-O-mycolipenoyl-trehalose + CoA. It catalyses the reaction alpha,alpha-trehalose + hexadecanoyl-CoA = 2-O-hexadecanoyl-alpha,alpha-trehalose + CoA. The catalysed reaction is 2-O-hexadecanoyl-alpha,alpha-trehalose + hexadecanoyl-CoA = 2-O,3-O-dihexadecanoyl-alpha,alpha-trehalose + CoA. Functionally, involved in the biosynthesis of polyacyltrehalose (PAT), a pentaacylated, trehalose-based glycolipid that could have a role in anchoring the bacterial capsule. Catalyzes the sequential transfer of two palmitoyl groups onto a single glucose residue of trehalose generating the diacylated product 2,3-diacyltrehalose (trehalose dipalmitate). In Mycobacterium tuberculosis (strain CDC 1551 / Oshkosh), this protein is Acyltransferase PapA3 (papA3).